A 622-amino-acid chain; its full sequence is MRINILSEDTSNKIAAGEVVERPFSVVKELVENSIDAGAKTINIEIENGGRTLIKVLDDGYGIDKDDIEKAFMPHATSKISKLQDIYSINTLGFRGEALPSIASVSKTTLKSRTKENEFGREISISGGSVDYIKDCGTNIGTHIEVRDLFYNVPAREKFLKSTAKEASSISDIVNRLALAHSEISFRLINNGKRVITTYATDNLIDTIRAIYGKKICDNVISFERHTDLVSVHGYVGNAEISRGSRNNQSIFINKRYIKNKLITAAVENAVKSFMMINKFPFFIIFLDIFPEFVDVNVHPTKSEVKFQNERDIFKIIFDTVHEGIRNSLKESFKVEALKEEEDKLFDIKEDVITKNEIKHDDKIDGYIKKDSFPVPVQIPIDLKRPIENYDNSTKENKDRSFDDFREKDIIKETSQEKETYDIITNKKAKFPELRVIGQFNNTYILAESFEELYIIDQHAAHEKILFEKYREDIKNKGVSSQILITPSVVELLPEDFIYYDENKEVFKNAGFVIEYFGDNTVAIKEVPLFLGKPLVKDLFLEIIDNLKNMGSGETSEVKYRSIATAACKSAVKAYHELTHDEMKTLIQDLRFAEDPFNCPHGRPTIVRLTVTDFEKKFKRIQ.

It belongs to the DNA mismatch repair MutL/HexB family.

This protein is involved in the repair of mismatches in DNA. It is required for dam-dependent methyl-directed DNA mismatch repair. May act as a 'molecular matchmaker', a protein that promotes the formation of a stable complex between two or more DNA-binding proteins in an ATP-dependent manner without itself being part of a final effector complex. This chain is DNA mismatch repair protein MutL, found in Clostridium acetobutylicum (strain ATCC 824 / DSM 792 / JCM 1419 / IAM 19013 / LMG 5710 / NBRC 13948 / NRRL B-527 / VKM B-1787 / 2291 / W).